The primary structure comprises 207 residues: dITP/XTP pyrophosphatase (207 aa).

7-12 is a substrate binding site; that stretch reads SNNAKK. Catalysis depends on D72, which acts as the Proton acceptor. D72 contacts Mg(2+). Substrate is bound by residues S73, 155–158, K183, and 188–189; these read FGYD and HR.

It belongs to the HAM1 NTPase family. In terms of assembly, homodimer. Requires Mg(2+) as cofactor.

The catalysed reaction is XTP + H2O = XMP + diphosphate + H(+). It carries out the reaction dITP + H2O = dIMP + diphosphate + H(+). It catalyses the reaction ITP + H2O = IMP + diphosphate + H(+). Functionally, pyrophosphatase that catalyzes the hydrolysis of nucleoside triphosphates to their monophosphate derivatives, with a high preference for the non-canonical purine nucleotides XTP (xanthosine triphosphate), dITP (deoxyinosine triphosphate) and ITP. Seems to function as a house-cleaning enzyme that removes non-canonical purine nucleotides from the nucleotide pool, thus preventing their incorporation into DNA/RNA and avoiding chromosomal lesions. The sequence is that of dITP/XTP pyrophosphatase from Corynebacterium diphtheriae (strain ATCC 700971 / NCTC 13129 / Biotype gravis).